A 554-amino-acid polypeptide reads, in one-letter code: DDB1- and CUL4-associated factor 11 homolog (554 aa).

Residues glutamine 24–proline 52 form a disordered region. Over residues aspartate 33–threonine 43 the composition is skewed to acidic residues. WD repeat units follow at residues glutamine 245–threonine 284, alanine 288–valine 328, glycine 336–glycine 375, glycine 414–arginine 458, and glycine 461–isoleucine 500. The interval proline 527–isoleucine 554 is disordered.

It belongs to the WD repeat LEC14B family.

Functionally, involved in regulation of lifespan. Required for dopaminergic CEP neuron degeneration in response to Mn(2+). This Caenorhabditis briggsae protein is DDB1- and CUL4-associated factor 11 homolog (wdr-23).